A 183-amino-acid polypeptide reads, in one-letter code: NADH-quinone oxidoreductase subunit A (183 aa).

A run of 3 helical transmembrane segments spans residues isoleucine 11–leucine 31, phenylalanine 63–tryptophan 83, and valine 98–leucine 118. A disordered region spans residues threonine 159–glutamate 183.

It belongs to the complex I subunit 3 family. As to quaternary structure, NDH-1 is composed of 14 different subunits. Subunits NuoA, H, J, K, L, M, N constitute the membrane sector of the complex.

It localises to the cell inner membrane. The catalysed reaction is a quinone + NADH + 5 H(+)(in) = a quinol + NAD(+) + 4 H(+)(out). Its function is as follows. NDH-1 shuttles electrons from NADH, via FMN and iron-sulfur (Fe-S) centers, to quinones in the respiratory chain. The immediate electron acceptor for the enzyme in this species is believed to be ubiquinone. Couples the redox reaction to proton translocation (for every two electrons transferred, four hydrogen ions are translocated across the cytoplasmic membrane), and thus conserves the redox energy in a proton gradient. In Acinetobacter baumannii (strain ACICU), this protein is NADH-quinone oxidoreductase subunit A.